Consider the following 1702-residue polypeptide: MLNKKFKLNFIALTVAYALTPYTEAALVRDDVDYQIFRDFAENKGRFSVGATNVEVRDKNNHSLGNVLPNGIPMIDFSVVDVDKRIATLINPQYVVGVKHVSNGVSELHFGNLNGNMNNGNDKSHRDVSSEENRYFSVEKNEYPTKLNGKAVTTEDQTQKRREDYYMPRLDKFVTEVAPIEASTASSDAGTYNDQNKYPAFVRLGSGSQFIYKKGDNYSLILNNHEVGGNNLKLVGDAYTYGIAGTPYKVNHENNGLIGFGNSKEEHSDPKGILSQDPLTNYAVLGDSGSPLFVYDREKGKWLFLGSYDFWAGYNKKSWQEWNIYKPEFAKTVLDKDTAGSLTGSNTQYNWNPTGKTSVISNGSESLNVDLFDSSQDTDSKKNNHGKSVTLRGSGTLTLNNNIDQGAGGLFFEGDYEVKGTSDSTTWKGAGVSVADGKTVTWKVHNPKSDRLAKIGKGTLIVEGKGENKGSLKVGDGTVILKQQADANNKVKAFSQVGIVSGRSTVVLNDDKQVDPNSIYFGFRGGRLDANGNNLTFEHIRNIDDGARLVNHNTSKTSTVTITGESLITDPNTITPYNIDAPDEDNPYAFRRIKDGGQLYLNLENYTYYALRKGASTRSELPKNSGESNENWLYMGKTSDEAKRNVMNHINNERMNGFNGYFGEEEGKNNGNLNVTFKGKSEQNRFLLTGGTNLNGDLKVEKGTLFLSGRPTPHARDIAGISSTKKDQHFAENNEVVVEDDWINRNFKATNINVTNNATLYSGRNVANITSNITASDNAKVHIGYKAGDTVCVRSDYTGYVTCTTDKLSDKALNSFNATNVSGNVNLSGNANFVLGKANLFGTISGTGNSQVRLTENSHWHLTGDSNVNQLNLDKGHIHLNAQNDANKVTTYNTLTVNSLSGNGSFYYLTDLSNKQGDKVVVTKSATGNFTLQVADKTGEPTKNELTLFDASNATRNNLNVSLVGNTVDLGAWKYKLRNVNGRYDLYNPEVEKRNQTVDTTNITTPNNIQADVPSVPSNNEEIARVETPVPPPAPATPSETTETVAENSKQESKTVEKNEQDATETTAQNGEVAEEAKPSVKANTQTNEVAQSGSETEETQTTEIKETAKVEKEEKAKVEKEEKAKVEKDEIQEAPQMASETSPKQAKPAPKEVSTDTKVEETQVQAQPQTQSTTVAAAEATSPNSKPAEETQPSEKTNAEPVTPVVSKNQTENTTDQPTEREKTAKVETEKTQEPPQVASQASPKQEQSETVQPQAVLESENVPTVNNAEEVQAQLQTQTSATVSTKQPAPENSINTGSATAITETAEKSDKPQTETAASTEDASQHKANTVADNSVANNSESSEPKSRRRRSISQPQETSAEETTAASTDETTIADNSKRSKPNRRSRRSVRSEPTVTNGSDRSTVALRDLTSTNTNAVISDAMAKAQFVALNVGKAVSQHISQLEMNNEGQYNVWVSNTSMNENYSSSQYRRFSSKSTQTQLGWDQTISNNVQLGGVFTYVRNSNNFDKASSKNTLAQVNFYSKYYADNHWYLGIDLGYGKFQSNLKTNHNAKFARHTAQFGLTAGKAFNLGNFGITPIVGVRYSYLSNANFALAKDRIKVNPISVKTAFAQVDLSYTYHLGEFSVTPILSARYDTNQGSGKINVNQYDFAYNVENQQQYNAGLKLKYHNVKLSLIGGLTKAKQAEKQKTAELKLSFSF.

A signal peptide spans 1–25; sequence MLNKKFKLNFIALTVAYALTPYTEA. Positions 26-332 constitute a Peptidase S6 domain; that stretch reads ALVRDDVDYQ…NIYKPEFAKT (307 aa). S288 is an active-site residue. The segment at 991 to 1411 is disordered; the sequence is VEKRNQTVDT…GSDRSTVALR (421 aa). Residues 997–1021 are compositionally biased toward polar residues; it reads TVDTTNITTPNNIQADVPSVPSNNE. Residues 1037–1047 are compositionally biased toward low complexity; that stretch reads TPSETTETVAE. The segment covering 1049–1061 has biased composition (basic and acidic residues); it reads SKQESKTVEKNEQ. Residues 1082–1095 show a composition bias toward polar residues; it reads KANTQTNEVAQSGS. 2 stretches are compositionally biased toward basic and acidic residues: residues 1104-1132 and 1150-1162; these read EIKE…KDEI and APKE…KVEE. A run of 2 repeats spans residues 1109-1116 and 1117-1124. The segment at 1109–1124 is 2 X 8 AA tandem repeats of A-K-V-E-K-E-E-K; the sequence is AKVEKEEKAKVEKEEK. Polar residues-rich tracts occupy residues 1163–1186 and 1207–1218; these read TQVQ…SPNS and VSKNQTENTTDQ. Positions 1219 to 1234 are enriched in basic and acidic residues; that stretch reads PTEREKTAKVETEKTQ. Polar residues-rich tracts occupy residues 1235 to 1255, 1263 to 1305, and 1316 to 1341; these read EPPQ…TVQP, NVPT…TAIT, and TETA…VANN. Over residues 1360-1378 the composition is skewed to low complexity; it reads ETSAEETTAASTDETTIAD. The segment covering 1382–1392 has biased composition (basic residues); sequence RSKPNRRSRRS. One can recognise an Autotransporter domain in the interval 1450 to 1702; it reads NNEGQYNVWV…TAELKLSFSF (253 aa).

It localises to the periplasm. It is found in the secreted. The protein resides in the cell surface. Its subcellular location is the cell outer membrane. It catalyses the reaction Cleavage of immunoglobulin A molecules at certain Pro-|-Xaa bonds in the hinge region. No small molecule substrates are known.. Its function is as follows. Virulence factor; cleaves host immunoglobulin A producing intact Fc and Fab fragments. The protein is Immunoglobulin A1 protease autotransporter (iga) of Haemophilus influenzae.